The chain runs to 213 residues: Large ribosomal subunit protein uL1 (213 aa).

It belongs to the universal ribosomal protein uL1 family. In terms of assembly, part of the 50S ribosomal subunit.

Functionally, binds directly to 23S rRNA. Probably involved in E site tRNA release. Protein L1 is also a translational repressor protein, it controls the translation of its operon by binding to its mRNA. The polypeptide is Large ribosomal subunit protein uL1 (Methanosarcina barkeri (strain Fusaro / DSM 804)).